A 99-amino-acid polypeptide reads, in one-letter code: Aspartyl/glutamyl-tRNA(Asn/Gln) amidotransferase subunit C (99 aa).

It belongs to the GatC family. Heterotrimer of A, B and C subunits.

It carries out the reaction L-glutamyl-tRNA(Gln) + L-glutamine + ATP + H2O = L-glutaminyl-tRNA(Gln) + L-glutamate + ADP + phosphate + H(+). The catalysed reaction is L-aspartyl-tRNA(Asn) + L-glutamine + ATP + H2O = L-asparaginyl-tRNA(Asn) + L-glutamate + ADP + phosphate + 2 H(+). In terms of biological role, allows the formation of correctly charged Asn-tRNA(Asn) or Gln-tRNA(Gln) through the transamidation of misacylated Asp-tRNA(Asn) or Glu-tRNA(Gln) in organisms which lack either or both of asparaginyl-tRNA or glutaminyl-tRNA synthetases. The reaction takes place in the presence of glutamine and ATP through an activated phospho-Asp-tRNA(Asn) or phospho-Glu-tRNA(Gln). This Cupriavidus metallidurans (strain ATCC 43123 / DSM 2839 / NBRC 102507 / CH34) (Ralstonia metallidurans) protein is Aspartyl/glutamyl-tRNA(Asn/Gln) amidotransferase subunit C.